The sequence spans 185 residues: Elongation factor P (185 aa).

Belongs to the elongation factor P family.

The protein localises to the cytoplasm. It participates in protein biosynthesis; polypeptide chain elongation. Its function is as follows. Involved in peptide bond synthesis. Stimulates efficient translation and peptide-bond synthesis on native or reconstituted 70S ribosomes in vitro. Probably functions indirectly by altering the affinity of the ribosome for aminoacyl-tRNA, thus increasing their reactivity as acceptors for peptidyl transferase. This chain is Elongation factor P, found in Staphylococcus epidermidis (strain ATCC 35984 / DSM 28319 / BCRC 17069 / CCUG 31568 / BM 3577 / RP62A).